We begin with the raw amino-acid sequence, 447 residues long: Dihydroorotase (447 aa).

2 residues coordinate Zn(2+): histidine 84 and histidine 86. Residues 86-88 and asparagine 118 contribute to the substrate site; that span reads HLR. Residues aspartate 174, histidine 201, and histidine 255 each contribute to the Zn(2+) site. Position 301 (asparagine 301) interacts with substrate. Aspartate 328 contributes to the Zn(2+) binding site. The active site involves aspartate 328. Residues histidine 332 and 346 to 347 contribute to the substrate site; that span reads FG.

This sequence belongs to the metallo-dependent hydrolases superfamily. DHOase family. Class I DHOase subfamily. Zn(2+) is required as a cofactor.

The catalysed reaction is (S)-dihydroorotate + H2O = N-carbamoyl-L-aspartate + H(+). The protein operates within pyrimidine metabolism; UMP biosynthesis via de novo pathway; (S)-dihydroorotate from bicarbonate: step 3/3. In terms of biological role, catalyzes the reversible cyclization of carbamoyl aspartate to dihydroorotate. The sequence is that of Dihydroorotase from Anaplasma phagocytophilum (strain HZ).